Reading from the N-terminus, the 178-residue chain is Protein GrpE (178 aa).

It belongs to the GrpE family. Homodimer.

It is found in the cytoplasm. Its function is as follows. Participates actively in the response to hyperosmotic and heat shock by preventing the aggregation of stress-denatured proteins, in association with DnaK and GrpE. It is the nucleotide exchange factor for DnaK and may function as a thermosensor. Unfolded proteins bind initially to DnaJ; upon interaction with the DnaJ-bound protein, DnaK hydrolyzes its bound ATP, resulting in the formation of a stable complex. GrpE releases ADP from DnaK; ATP binding to DnaK triggers the release of the substrate protein, thus completing the reaction cycle. Several rounds of ATP-dependent interactions between DnaJ, DnaK and GrpE are required for fully efficient folding. The sequence is that of Protein GrpE from Rickettsia typhi (strain ATCC VR-144 / Wilmington).